A 367-amino-acid polypeptide reads, in one-letter code: Probable butyrate kinase (367 aa).

Belongs to the acetokinase family.

It localises to the cytoplasm. It catalyses the reaction butanoate + ATP = butanoyl phosphate + ADP. The sequence is that of Probable butyrate kinase from Bacillus cereus (strain ZK / E33L).